The chain runs to 400 residues: Serpin E3 (400 aa).

The signal sequence occupies residues 1-19 (MQSLLLALLLLPVCSPGGA). A glycan (N-linked (GlcNAc...) asparagine) is linked at N46.

Belongs to the serpin family.

Its subcellular location is the secreted. Functionally, probable serine protease inhibitor. This Bos taurus (Bovine) protein is Serpin E3 (SERPINE3).